The following is a 327-amino-acid chain: L-lactate dehydrogenase (327 aa).

Residues valine 18, aspartate 39, lysine 44, tyrosine 69, and 83 to 84 (GA) contribute to the NAD(+) site. Residues glutamine 86, arginine 92, and 124-127 (NPVD) contribute to the substrate site. NAD(+) is bound by residues 122 to 124 (AAN) and serine 147. 152-155 (DSAR) contributes to the substrate binding site. Arginine 157 and histidine 172 together coordinate beta-D-fructose 1,6-bisphosphate. Histidine 179 serves as the catalytic Proton acceptor. Tyrosine 224 is modified (phosphotyrosine). Threonine 233 serves as a coordination point for substrate.

This sequence belongs to the LDH/MDH superfamily. LDH family. Homotetramer.

It is found in the cytoplasm. The enzyme catalyses (S)-lactate + NAD(+) = pyruvate + NADH + H(+). It functions in the pathway fermentation; pyruvate fermentation to lactate; (S)-lactate from pyruvate: step 1/1. With respect to regulation, allosterically activated by fructose 1,6-bisphosphate (FBP). Catalyzes the conversion of lactate to pyruvate. The sequence is that of L-lactate dehydrogenase from Streptococcus uberis (strain ATCC BAA-854 / 0140J).